The sequence spans 261 residues: Ribosomal RNA small subunit methyltransferase J (261 aa).

S-adenosyl-L-methionine contacts are provided by residues 109–110 (RD), 125–126 (ER), and aspartate 179.

Belongs to the methyltransferase superfamily. RsmJ family.

It localises to the cytoplasm. It carries out the reaction guanosine(1516) in 16S rRNA + S-adenosyl-L-methionine = N(2)-methylguanosine(1516) in 16S rRNA + S-adenosyl-L-homocysteine + H(+). In terms of biological role, specifically methylates the guanosine in position 1516 of 16S rRNA. In Pseudomonas paraeruginosa (strain DSM 24068 / PA7) (Pseudomonas aeruginosa (strain PA7)), this protein is Ribosomal RNA small subunit methyltransferase J.